We begin with the raw amino-acid sequence, 146 residues long: uncharacterized protein (146 aa).

This is an uncharacterized protein from Haemophilus influenzae (strain ATCC 51907 / DSM 11121 / KW20 / Rd).